The sequence spans 179 residues: MDREDINPMLSRLDVENNNTFSSFVDKTLMMMPPSTFSGEVEPSSSSSWYPESFHVHAPPLPPENDQIGEKGKELKEKRSRKVPRIAFHTRSDDDVLDDGYRWRKYGQKSVKHNAHPRSYYRCTYHTCNVKKQVQRLAKDPNVVVTTYEGVHNHPCEKLMETLNPLLRQLQFLSSFSNL.

A DNA-binding region (WRKY) is located at residues 92-157 (SDDDVLDDGY…YEGVHNHPCE (66 aa)).

It belongs to the WRKY group II-c family.

The protein resides in the nucleus. Transcription factor. Interacts specifically with the W box (5'-(T)TGAC[CT]-3'), a frequently occurring elicitor-responsive cis-acting element. This Arabidopsis thaliana (Mouse-ear cress) protein is Probable WRKY transcription factor 24 (WRKY24).